The sequence spans 475 residues: Chromosomal replication initiator protein DnaA (475 aa).

Residues 1-71 form a domain I, interacts with DnaA modulators region; that stretch reads MTNDTWNEVR…RQLSAHGAGA (71 aa). Residues 71-133 form a domain II region; sequence ADRVKFTVSP…PAQPRELPGA (63 aa). Over residues 107–127 the composition is skewed to low complexity; the sequence is APAPVHHTAPAPAPVAAPAQP. The interval 107–129 is disordered; that stretch reads APAPVHHTAPAPAPVAAPAQPRE. Positions 134–355 are domain III, AAA+ region; that stretch reads KLNPNFTFAN…GALTRLFAFA (222 aa). ATP is bound by residues Gly-178, Gly-180, Lys-181, and Thr-182. The tract at residues 356–475 is domain IV, binds dsDNA; sequence DLVRREVTVD…AELLRRTLEA (120 aa).

It belongs to the DnaA family. In terms of assembly, oligomerizes as a right-handed, spiral filament on DNA at oriC.

It localises to the cytoplasm. Functionally, plays an essential role in the initiation and regulation of chromosomal replication. ATP-DnaA binds to the origin of replication (oriC) to initiate formation of the DNA replication initiation complex once per cell cycle. Binds the DnaA box (a 9 base pair repeat at the origin) and separates the double-stranded (ds)DNA. Forms a right-handed helical filament on oriC DNA; dsDNA binds to the exterior of the filament while single-stranded (ss)DNA is stabiized in the filament's interior. The ATP-DnaA-oriC complex binds and stabilizes one strand of the AT-rich DNA unwinding element (DUE), permitting loading of DNA polymerase. After initiation quickly degrades to an ADP-DnaA complex that is not apt for DNA replication. Binds acidic phospholipids. The polypeptide is Chromosomal replication initiator protein DnaA (Jannaschia sp. (strain CCS1)).